The primary structure comprises 443 residues: ATP synthase subunit b-delta (443 aa).

Residues 1–168 (MSTFIGQLIG…PSDAALDDAV (168 aa)) are ATP synthase subunit b. The chain crosses the membrane as a helical span at residues 4-24 (FIGQLIGFAVIVFLLVRFVVP). Residues 169-443 (GSRMRSTSRE…LASAETQLPD (275 aa)) form an ATP synthase subunit delta region.

In the N-terminal section; belongs to the ATPase B chain family. It in the C-terminal section; belongs to the ATPase delta chain family. F-type ATPases have 2 components, F(1) - the catalytic core - and F(0) - the membrane proton channel. F(1) has five subunits: alpha(3), beta(3), gamma(1), delta(1), epsilon(1). F(0) has three main subunits: a(1), b(2) and c(10-14). The alpha and beta chains form an alternating ring which encloses part of the gamma chain. F(1) is attached to F(0) by a central stalk formed by the gamma and epsilon chains, while a peripheral stalk is formed by the delta and b chains.

The protein resides in the cell membrane. Its function is as follows. F(1)F(0) ATP synthase produces ATP from ADP in the presence of a proton or sodium gradient. F-type ATPases consist of two structural domains, F(1) containing the extramembraneous catalytic core and F(0) containing the membrane proton channel, linked together by a central stalk and a peripheral stalk. During catalysis, ATP synthesis in the catalytic domain of F(1) is coupled via a rotary mechanism of the central stalk subunits to proton translocation. In terms of biological role, this fusion protein includes a component of the F(0) channel (subunit b) and of the F(1) subunit (subunit delta). Two copies of subunit b and one of delta together form the peripheral 'stator' stalk which links F(1) to F(0). This chain is ATP synthase subunit b-delta (atpFH), found in Mycobacterium sp. (strain JLS).